The following is a 1477-amino-acid chain: FHA domain-containing protein PS1 (1477 aa).

The FHA domain maps to 64-115 (LVVGRHPDCDILLTHPSISRFHLEIRSISSRQKLFVTDLSSVHGTWVRDLRI). Disordered regions lie at residues 188–218 (ENTT…DEDT), 588–644 (LGKA…PKSF), 789–818 (PNSF…DSEF), 832–911 (LNQK…LIGS), 942–979 (ALAA…RDDV), 1004–1030 (IRTN…KQAL), and 1159–1225 (VEQE…IRSS). The span at 589 to 607 (GKADIRSHEENGESEDSRQ) shows a compositional bias: basic and acidic residues. The segment covering 832–849 (LNQKRNGETKVSSRQASP) has biased composition (polar residues). Over residues 870–883 (QSLCSSSQPPSESE) the composition is skewed to low complexity. Polar residues-rich tracts occupy residues 885 to 897 (NPAT…SGII), 957 to 971 (LSSS…QTPE), 1007 to 1018 (NKSQGKQKQTGR), and 1198 to 1212 (SSFQ…SSTA). A compositionally biased stretch (low complexity) spans 1213–1225 (SARNNISRGIRSS).

In terms of biological role, required for normal spindle orientation at male meiosis II and normal formation of tetrad of microspores. Not involved in female meiosis. This chain is FHA domain-containing protein PS1, found in Arabidopsis thaliana (Mouse-ear cress).